We begin with the raw amino-acid sequence, 436 residues long: GTPase Der (436 aa).

EngA-type G domains are found at residues 4–167 and 175–351; these read PTIA…PNEY and IKFS…ESQN. GTP contacts are provided by residues 10 to 17, 57 to 61, 119 to 122, 181 to 188, 229 to 233, and 294 to 297; these read GRPNVGKS, DTGGI, NKVD, DTAGM, and NKWD. Positions 352–436 constitute a KH-like domain; that stretch reads TRIPSAVLND…PIHLIARKRK (85 aa).

Belongs to the TRAFAC class TrmE-Era-EngA-EngB-Septin-like GTPase superfamily. EngA (Der) GTPase family. As to quaternary structure, associates with the 50S ribosomal subunit.

In terms of biological role, GTPase that plays an essential role in the late steps of ribosome biogenesis. This Streptococcus pneumoniae (strain JJA) protein is GTPase Der.